The following is a 444-amino-acid chain: Probable D-serine dehydratase (444 aa).

The residue at position 118 (K118) is an N6-(pyridoxal phosphate)lysine.

The protein belongs to the serine/threonine dehydratase family. DsdA subfamily. Pyridoxal 5'-phosphate is required as a cofactor.

The catalysed reaction is D-serine = pyruvate + NH4(+). This chain is Probable D-serine dehydratase, found in Acinetobacter baumannii (strain AB0057).